The chain runs to 427 residues: MRFSIFFKVVALFMITLFSFGAFAYYFVSSQISHENYQNEMRHYQFVTTINEILNNYSDYRAIEDYLYKIGFRETTIENLEKVLAKRRHQLHHRNIGYAEVFKFSDMVFILLKKDEHFVLYKDLHSVSYRNYFLAITVGLLLILFLFLFVLQSLLPLRELRSQVKPFAQGDKSVSCKSKQKDEIGDLANEFDNCILKINAMNESRVLFLRSIMHELRTPITKGKILSSMLKEELSCKRFSSIFDHLNMLIEQFARIEQLASKNYGSNKEKFLMSDLIDKIEKMLLIDEDKESPIHVSSSNYIIEADFELFSIALKNMVDNAIKYSDDKQVFLDFIGNNLVVSNKSKPLKEDFEKYLQPYFKSSNPSQAHGFGLGMYIIKNALEAMGLNLSYHYSNGRICFTIHDCVFNSFYDLEEDNEELPPPPPKI.

Transmembrane regions (helical) follow at residues F3–F23 and N131–L151. An HAMP domain is found at L151–E203. Residues S211–I398 form the Histidine kinase domain. H214 is subject to Phosphohistidine; by autocatalysis.

Post-translationally, autophosphorylated.

The protein resides in the membrane. It catalyses the reaction ATP + protein L-histidine = ADP + protein N-phospho-L-histidine.. Its function is as follows. Member of the two-component regulatory system ArsS/ArsR that regulates genes involved in biofilm formation and acid adaptation by acting on major ammonia-producing pathways. Functions as a sensor protein kinase which is autophosphorylated at a histidine residue and transfers its phosphate group to the conserved aspartic acid residue in the regulatory domain of ArsR. In turn, ArsR binds to the upstream promoter regions of target genes including ureA, amiE and amiF to positively regulate their expression in response to acidic pH. Also participates in acidic acclimatation in a phosphorylation-independent pathway by regulating acid-induced trafficking of urease and its accessory proteins to the inner membrane. The protein is Sensor histidine kinase ArsS of Helicobacter pylori (strain ATCC 700392 / 26695) (Campylobacter pylori).